The chain runs to 686 residues: 3',5'-cyclic-AMP phosphodiesterase 4C (686 aa).

4 positions are modified to phosphoserine: Ser-9, Ser-28, Ser-40, and Ser-83. 2 disordered regions span residues 88–116 (NGLP…VHHV) and 124–143 (YRSD…TSSA). Residues 124–133 (YRSDSDHEPS) are compositionally biased toward basic and acidic residues. Residues 313-642 (VQTDQEEQLA…EWYQSRIPCS (330 aa)) form the PDEase domain. His-389 (proton donor) is an active-site residue. His-389 lines the 3',5'-cyclic AMP pocket. Positions 389 and 393 each coordinate AMP. Residues His-393, His-429, Asp-430, and Asp-547 each coordinate Zn(2+). AMP-binding residues include Asp-430, Asp-547, Gln-598, and Phe-601. A Mg(2+)-binding site is contributed by Asp-430. Asp-430 is a binding site for Mn(2+). The 3',5'-cyclic AMP site is built by Gln-598 and Phe-601. Ser-642 bears the Phosphoserine mark. Positions 660–671 (EAEEEEEEEDEG) are enriched in acidic residues. The interval 660 to 686 (EAEEEEEEEDEGQCTALNRESSELPST) is disordered. Residues 674-686 (TALNRESSELPST) show a composition bias toward polar residues.

The protein belongs to the cyclic nucleotide phosphodiesterase family. PDE4 subfamily. As to quaternary structure, part of a complex containing AKAP5, ADCY5, ADCY6 and PKD2. The cofactor is Zn(2+). Mg(2+) is required as a cofactor. Requires Mn(2+) as cofactor.

It localises to the cell projection. It is found in the cilium. The enzyme catalyses 3',5'-cyclic AMP + H2O = AMP + H(+). It participates in purine metabolism; 3',5'-cyclic AMP degradation; AMP from 3',5'-cyclic AMP: step 1/1. In terms of biological role, hydrolyzes the second messenger cAMP, which is a key regulator of many important physiological processes. This Mus musculus (Mouse) protein is 3',5'-cyclic-AMP phosphodiesterase 4C.